The chain runs to 386 residues: GTPase Obg (386 aa).

Positions 1 to 159 (MKFVDEAKIK…RNLLLELLLL (159 aa)) constitute an Obg domain. Residues 160-333 (ADVGMLGLPN…LCRDVVEYLE (174 aa)) form the OBG-type G domain. Residues 166–173 (GLPNAGKS), 191–195 (FTTLV), 213–216 (DIPG), 283–286 (NKTD), and 314–316 (AAI) contribute to the GTP site. Positions 173 and 193 each coordinate Mg(2+).

It belongs to the TRAFAC class OBG-HflX-like GTPase superfamily. OBG GTPase family. Monomer. The cofactor is Mg(2+).

The protein localises to the cytoplasm. In terms of biological role, an essential GTPase which binds GTP, GDP and possibly (p)ppGpp with moderate affinity, with high nucleotide exchange rates and a fairly low GTP hydrolysis rate. Plays a role in control of the cell cycle, stress response, ribosome biogenesis and in those bacteria that undergo differentiation, in morphogenesis control. The protein is GTPase Obg of Psychromonas ingrahamii (strain DSM 17664 / CCUG 51855 / 37).